The following is a 616-amino-acid chain: Dihydroxy-acid dehydratase (616 aa).

Aspartate 81 contributes to the Mg(2+) binding site. Cysteine 122 serves as a coordination point for [2Fe-2S] cluster. The Mg(2+) site is built by aspartate 123 and lysine 124. An N6-carboxylysine modification is found at lysine 124. Residue cysteine 195 coordinates [2Fe-2S] cluster. A Mg(2+)-binding site is contributed by glutamate 491. The active-site Proton acceptor is the serine 517.

It belongs to the IlvD/Edd family. Homodimer. The cofactor is [2Fe-2S] cluster. It depends on Mg(2+) as a cofactor.

The catalysed reaction is (2R)-2,3-dihydroxy-3-methylbutanoate = 3-methyl-2-oxobutanoate + H2O. The enzyme catalyses (2R,3R)-2,3-dihydroxy-3-methylpentanoate = (S)-3-methyl-2-oxopentanoate + H2O. It participates in amino-acid biosynthesis; L-isoleucine biosynthesis; L-isoleucine from 2-oxobutanoate: step 3/4. It functions in the pathway amino-acid biosynthesis; L-valine biosynthesis; L-valine from pyruvate: step 3/4. Its function is as follows. Functions in the biosynthesis of branched-chain amino acids. Catalyzes the dehydration of (2R,3R)-2,3-dihydroxy-3-methylpentanoate (2,3-dihydroxy-3-methylvalerate) into 2-oxo-3-methylpentanoate (2-oxo-3-methylvalerate) and of (2R)-2,3-dihydroxy-3-methylbutanoate (2,3-dihydroxyisovalerate) into 2-oxo-3-methylbutanoate (2-oxoisovalerate), the penultimate precursor to L-isoleucine and L-valine, respectively. The chain is Dihydroxy-acid dehydratase from Sodalis glossinidius (strain morsitans).